The sequence spans 407 residues: M protein, serotype 2.1 (407 aa).

The N-terminal stretch at 1–41 (MARKDTNKQYSLRKLKTGTASVAVAVAVLGAGFANQTTVKA) is a signal peptide. Residues 81–94 (VEEEHKKVEEEHKK) are 2 X 7 AA tandem repeats. Composition is skewed to basic and acidic residues over residues 83–144 (EEHK…KRYQ), 152–229 (QLEK…EKQI), 237–264 (LSRD…EKQI), and 272–288 (LSRD…KVEA). Residues 83–289 (EEHKKVEEEH…REAKKKVEAD (207 aa)) form a disordered region. 4 C repeats span residues 151 to 185 (QQLE…EAEH), 186 to 220 (QKLK…EAEH), 221 to 255 (QKLK…EAEH), and 256 to 290 (QKLK…EADL). D repeat units follow at residues 323–328 (AKLEAE), 329–334 (AKALKE), 337–342 (AKQAEE), and 344–349 (AKLKGN). The segment at 344–382 (AKLKGNQTPNAKVAPQANRSRSAMTQQKRTLPSTGETAN) is disordered. Over residues 360 to 380 (ANRSRSAMTQQKRTLPSTGET) the composition is skewed to polar residues. The LPXTG sorting signal motif lies at 374–378 (LPSTG). At T377 the chain carries Pentaglycyl murein peptidoglycan amidated threonine. Positions 378-407 (GETANPFFTAAAATVMVSAGMLALKRKEEN) are cleaved as a propeptide — removed by sortase.

This sequence belongs to the M protein family.

The protein resides in the secreted. Its subcellular location is the cell wall. In terms of biological role, this protein is one of the different antigenic serotypes of protein M. Protein M is closely associated with virulence of the bacterium and can render the organism resistant to phagocytosis. In Streptococcus pyogenes, this protein is M protein, serotype 2.1 (emmL2.1).